A 166-amino-acid chain; its full sequence is Large ribosomal subunit protein uL10 (166 aa).

The protein belongs to the universal ribosomal protein uL10 family. In terms of assembly, part of the ribosomal stalk of the 50S ribosomal subunit. The N-terminus interacts with L11 and the large rRNA to form the base of the stalk. The C-terminus forms an elongated spine to which L12 dimers bind in a sequential fashion forming a multimeric L10(L12)X complex.

Forms part of the ribosomal stalk, playing a central role in the interaction of the ribosome with GTP-bound translation factors. The sequence is that of Large ribosomal subunit protein uL10 from Staphylococcus epidermidis (strain ATCC 35984 / DSM 28319 / BCRC 17069 / CCUG 31568 / BM 3577 / RP62A).